Reading from the N-terminus, the 807-residue chain is Maternal DNA replication licensing factor mcm3 (807 aa).

An MCM domain is found at 295–502 (IFEHLSKSLA…NDQEIADHVL (208 aa)). 345–352 (GDPSVAKS) is a binding site for ATP. Positions 477–480 (SRFD) match the Arginine finger motif. Basic and acidic residues predominate over residues 664–673 (KTDKDLHDEN). The tract at residues 664–741 (KTDKDLHDEN…QDGKRSLSQN (78 aa)) is disordered. Polar residues predominate over residues 707 to 723 (FSEQDSSLNENLSQSLR). The segment covering 727-741 (KKAESQDGKRSLSQN) has biased composition (basic and acidic residues).

This sequence belongs to the MCM family. Component of the mcm2-7 complex (RLF-M). The complex forms a toroidal hexameric ring with the proposed subunit order mcm2-mcm6-mcm4-mcm7-mcm3-mcm5. The heterodimer of mmcm3/mcm5 interacts with mcm4, mmcm6, mcm7 and weakly with mcm2. Interacts with mcm7, though this interaction may not be direct, and remains in a complex with mcm7 throughout the cell cycle. Component of the CMG helicase complex, composed of the mcm2-7 complex, the GINS complex and cdc45.

The protein resides in the nucleus. The protein localises to the chromosome. The enzyme catalyses ATP + H2O = ADP + phosphate + H(+). Acts as a component of the mcm2-7 complex (mcm complex) which is the putative replicative helicase essential for 'once per cell cycle' DNA replication initiation and elongation in eukaryotic cells. The active ATPase sites in the mcm2-7 ring are formed through the interaction surfaces of two neighboring subunits such that a critical structure of a conserved arginine finger motif is provided in trans relative to the ATP-binding site of the Walker A box of the adjacent subunit. The six ATPase active sites, however, are likely to contribute differentially to the complex helicase activity. The existence of maternal and zygotic forms of mcm3 and mcm6 suggests that specific forms of mcm2-7 complexes may be used during different stages of development. This Xenopus laevis (African clawed frog) protein is Maternal DNA replication licensing factor mcm3 (mmcm3).